The following is a 220-amino-acid chain: UPF0758 protein Asuc_0013 (220 aa).

The MPN domain maps to 98-220 (EFTNPLTVRL…YFSFAEQDWL (123 aa)). Residues H169, H171, and D182 each contribute to the Zn(2+) site. The short motif at 169-182 (HNHPSGSAEPSASD) is the JAMM motif element.

This sequence belongs to the UPF0758 family.

This is UPF0758 protein Asuc_0013 from Actinobacillus succinogenes (strain ATCC 55618 / DSM 22257 / CCUG 43843 / 130Z).